Reading from the N-terminus, the 420-residue chain is Glucose-1-phosphate adenylyltransferase (420 aa).

Alpha-D-glucose 1-phosphate contacts are provided by residues Tyr107, Gly172, 187-188 (EK), and Ser205.

This sequence belongs to the bacterial/plant glucose-1-phosphate adenylyltransferase family. Homotetramer.

It carries out the reaction alpha-D-glucose 1-phosphate + ATP + H(+) = ADP-alpha-D-glucose + diphosphate. It functions in the pathway glycan biosynthesis; glycogen biosynthesis. Its function is as follows. Involved in the biosynthesis of ADP-glucose, a building block required for the elongation reactions to produce glycogen. Catalyzes the reaction between ATP and alpha-D-glucose 1-phosphate (G1P) to produce pyrophosphate and ADP-Glc. The chain is Glucose-1-phosphate adenylyltransferase from Sinorhizobium fredii (strain NBRC 101917 / NGR234).